The following is a 399-amino-acid chain: Forkhead box protein Q1 (399 aa).

The disordered stretch occupies residues 1-112 (MKLEVFAPRA…EGARSKPYTR (112 aa)). A compositionally biased stretch (low complexity) spans 32–54 (LSAAGDDSLGSDGDCAANSPAAG). Gly residues predominate over residues 55–66 (SGAGDLEGGGGE). Residues 114–205 (PKPPYSYIAL…SEYTFADGVF (92 aa)) constitute a DNA-binding region (fork-head). Positions 211–263 (RLSHRTTVSASGYGGGSPPGPAGTPQPAPTAGSSPIARSPARQEEGSSPASKF) are disordered. A compositionally biased stretch (pro residues) spans 228–238 (PPGPAGTPQPA).

It is found in the nucleus. In terms of biological role, plays a role in hair follicle differentiation. The chain is Forkhead box protein Q1 (Foxq1) from Rattus norvegicus (Rat).